The following is a 154-amino-acid chain: Cytochrome c-type biogenesis protein CcmE (154 aa).

The Cytoplasmic portion of the chain corresponds to 1 to 7 (MKPRQKR). A helical; Signal-anchor for type II membrane protein membrane pass occupies residues 8–28 (LVLIVGIVAAVGVAAALVLNA). At 29 to 154 (FQSNLVFFYS…GETVVKETRP (126 aa)) the chain is on the periplasmic side. Heme-binding residues include H121 and Y125. Residues 131–154 (AEALQRAGASNQKLGETVVKETRP) form a disordered region.

It belongs to the CcmE/CycJ family.

It is found in the cell inner membrane. Functionally, heme chaperone required for the biogenesis of c-type cytochromes. Transiently binds heme delivered by CcmC and transfers the heme to apo-cytochromes in a process facilitated by CcmF and CcmH. The protein is Cytochrome c-type biogenesis protein CcmE of Methylibium petroleiphilum (strain ATCC BAA-1232 / LMG 22953 / PM1).